We begin with the raw amino-acid sequence, 196 residues long: Chaperone protein TorD (196 aa).

The protein belongs to the TorD/DmsD family. TorD subfamily.

Its subcellular location is the cytoplasm. Involved in the biogenesis of TorA. Acts on TorA before the insertion of the molybdenum cofactor and, as a result, probably favors a conformation of the apoenzyme that is competent for acquiring the cofactor. This is Chaperone protein TorD from Pasteurella multocida (strain Pm70).